We begin with the raw amino-acid sequence, 186 residues long: Ribosome-recycling factor (186 aa).

It belongs to the RRF family.

It is found in the cytoplasm. In terms of biological role, responsible for the release of ribosomes from messenger RNA at the termination of protein biosynthesis. May increase the efficiency of translation by recycling ribosomes from one round of translation to another. The protein is Ribosome-recycling factor of Chlorobaculum tepidum (strain ATCC 49652 / DSM 12025 / NBRC 103806 / TLS) (Chlorobium tepidum).